The primary structure comprises 101 residues: MITLTHYLVLGALLFGISAMGIFMNRKNVLVLLMSIELMLLAVNFNFIAFSQHLGDTAGQIFVFFVLTVAAAESAIGLAIMVLVYRNRQTINVADLDELKG.

A run of 3 helical transmembrane segments spans residues 4–24 (LTHY…GIFM), 30–50 (LVLL…FIAF), and 61–81 (IFVF…LAIM).

This sequence belongs to the complex I subunit 4L family. In terms of assembly, NDH-1 is composed of 14 different subunits. Subunits NuoA, H, J, K, L, M, N constitute the membrane sector of the complex.

Its subcellular location is the cell inner membrane. The catalysed reaction is a quinone + NADH + 5 H(+)(in) = a quinol + NAD(+) + 4 H(+)(out). Functionally, NDH-1 shuttles electrons from NADH, via FMN and iron-sulfur (Fe-S) centers, to quinones in the respiratory chain. The immediate electron acceptor for the enzyme in this species is believed to be ubiquinone. Couples the redox reaction to proton translocation (for every two electrons transferred, four hydrogen ions are translocated across the cytoplasmic membrane), and thus conserves the redox energy in a proton gradient. In Neisseria meningitidis serogroup B (strain ATCC BAA-335 / MC58), this protein is NADH-quinone oxidoreductase subunit K.